A 553-amino-acid polypeptide reads, in one-letter code: Putative transport protein YidE (553 aa).

5 helical membrane passes run 4–24 (IALTVSVLALVAVVGLWIGNI), 28–48 (GVGFGIGGVLFGGIIVGHFVD), 65–85 (FGLILFVYTIGIQVGPGFFAS), 95–115 (LFAVLIVIMGGLVTAILHKIF), and 158–178 (MSYAMAYPFGICGILLTMWLM). RCK C-terminal domains are found at residues 192–276 (KHES…VIGK) and 279–361 (DTSL…VVGN). 6 helical membrane passes run 371–391 (MLPVFIGIGLGVLLGSIPLFV), 393–413 (GFPVALKLGLAGGPLIMALIL), 437–457 (LGIVLFLAVVGLKSGGDFVDT), 464–484 (LSWIGYGIFITAIPLITVGLL), 493–513 (YLTLCGMLAGSMTDPPALAFA), and 533–553 (LVMFLRIITPQLLAVIFWGMG).

It belongs to the AAE transporter (TC 2.A.81) family. YidE subfamily.

It is found in the cell membrane. The sequence is that of Putative transport protein YidE from Salmonella newport (strain SL254).